Reading from the N-terminus, the 1190-residue chain is PAN2-PAN3 deadenylation complex catalytic subunit PAN2 (1190 aa).

WD repeat units follow at residues 24–63 (TTIVNITSLQFDSVQNFIWCGDSRGYTRSFTGSFATNSLY), 129–166 (NKFNNLQAMTFNCNSFNDVVVGTDTSMMKFDLNKPNVL), 167–207 (SSFD…TMKT), 222–264 (GNYI…AIAP), 266–306 (PFPA…NVYL), and 322–361 (NNKPRMSNLEISENGDFLVFNDNCDNMHLWSISPSSKDFV). Positions 364–511 (PQPVEQPDII…FQYKFQGKLN (148 aa)) are linker. Residues 512–924 (KVPNCYSRLQ…KPIVIMYQQT (413 aa)) form the USP domain. In terms of domain architecture, Exonuclease spans 988-1158 (VAIDAEFVML…EDANTALLLY (171 aa)). Residues Asp-991, Glu-993, Asp-1097, and Asp-1150 each coordinate a divalent metal cation.

This sequence belongs to the peptidase C19 family. PAN2 subfamily. As to quaternary structure, forms a heterotrimer with an asymmetric homodimer of the regulatory subunit PAN3 to form the poly(A)-nuclease (PAN) deadenylation complex. The cofactor is a divalent metal cation.

The protein resides in the cytoplasm. The catalysed reaction is Exonucleolytic cleavage of poly(A) to 5'-AMP.. With respect to regulation, positively regulated by the regulatory subunit PAN3. Functionally, catalytic subunit of the poly(A)-nuclease (PAN) deadenylation complex, one of two cytoplasmic mRNA deadenylases involved in mRNA turnover. PAN specifically shortens poly(A) tails of RNA and the activity is stimulated by poly(A)-binding protein PAB1. PAN deadenylation is followed by rapid degradation of the shortened mRNA tails by the CCR4-NOT complex. Deadenylated mRNAs are then degraded by two alternative mechanisms, namely exosome-mediated 3'-5' exonucleolytic degradation, or deadenylation-dependent mRNA decaping and subsequent 5'-3' exonucleolytic degradation by XRN1. May also be involved in post-transcriptional maturation of mRNA poly(A) tails. The polypeptide is PAN2-PAN3 deadenylation complex catalytic subunit PAN2 (Candida albicans (strain SC5314 / ATCC MYA-2876) (Yeast)).